A 156-amino-acid polypeptide reads, in one-letter code: Small ribosomal subunit protein uS7c (156 aa).

This sequence belongs to the universal ribosomal protein uS7 family. As to quaternary structure, part of the 30S ribosomal subunit.

The protein localises to the plastid. Its subcellular location is the chloroplast. One of the primary rRNA binding proteins, it binds directly to 16S rRNA where it nucleates assembly of the head domain of the 30S subunit. This chain is Small ribosomal subunit protein uS7c (rps7), found in Mesostigma viride (Green alga).